We begin with the raw amino-acid sequence, 184 residues long: Photosystem I assembly protein Ycf4 (184 aa).

The next 2 helical transmembrane spans lie at 22 to 42 (FCWA…GTSS) and 57 to 77 (IIFF…LFIS).

The protein belongs to the Ycf4 family.

It localises to the plastid. It is found in the chloroplast thylakoid membrane. Seems to be required for the assembly of the photosystem I complex. The sequence is that of Photosystem I assembly protein Ycf4 from Crucihimalaya wallichii (Rock-cress).